The primary structure comprises 129 residues: M-zodatoxin-Lt8e (129 aa).

Positions 1–20 (MKYFVVALALVAAFVCIAES) are cleaved as a signal peptide. Residues 21-60 (KPAESEHELAEVEEENELADLEDAVWLEHLADLSDLEEAR) constitute a propeptide that is removed on maturation. A Processing quadruplet motif motif is present at residues 57 to 60 (EEAR).

Post-translationally, cleavage of the propeptide depends on the processing quadruplet motif (XXXR, with at least one of X being E). As to expression, expressed by the venom gland.

It localises to the secreted. Its function is as follows. Insecticidal, cytolytic and antimicrobial peptide. Forms voltage-dependent, ion-permeable channels in membranes. At high concentration causes cell membrane lysis. The chain is M-zodatoxin-Lt8e (cit 1-5) from Lachesana tarabaevi (Spider).